Consider the following 565-residue polypeptide: uncharacterized protein (565 aa).

The N-terminal stretch at 1–19 (MRWLATFVALLIAISSVSA) is a signal peptide. A compositionally biased stretch (polar residues) spans 494-504 (TGAENVTNNSV). Residues 494–525 (TGAENVTNNSVTATTPPAKASQQTPAPATPPV) form a disordered region. Positions 505-519 (TATTPPAKASQQTPA) are enriched in low complexity.

This is an uncharacterized protein from Archaeoglobus fulgidus (strain ATCC 49558 / DSM 4304 / JCM 9628 / NBRC 100126 / VC-16).